The primary structure comprises 102 residues: MISLLSIKMQAIKELDSEEEPKVGEFYKGNTISFCKNSLENDTQLPQILFCINPKSIRNFLFPPIAISDPKEAQNHCSSYYYIKYRYYIVQSRCGMMGRMSF.

This is an uncharacterized protein from Schizosaccharomyces pombe (strain 972 / ATCC 24843) (Fission yeast).